The primary structure comprises 134 residues: Aspartate 1-decarboxylase (134 aa).

Ser25 acts as the Schiff-base intermediate with substrate; via pyruvic acid in catalysis. Ser25 is subject to Pyruvic acid (Ser). Residue Thr57 coordinates substrate. Tyr58 functions as the Proton donor in the catalytic mechanism. 73–75 contributes to the substrate binding site; that stretch reads GAA.

The protein belongs to the PanD family. As to quaternary structure, heterooctamer of four alpha and four beta subunits. Pyruvate serves as cofactor. Post-translationally, is synthesized initially as an inactive proenzyme, which is activated by self-cleavage at a specific serine bond to produce a beta-subunit with a hydroxyl group at its C-terminus and an alpha-subunit with a pyruvoyl group at its N-terminus.

Its subcellular location is the cytoplasm. The catalysed reaction is L-aspartate + H(+) = beta-alanine + CO2. It participates in cofactor biosynthesis; (R)-pantothenate biosynthesis; beta-alanine from L-aspartate: step 1/1. Catalyzes the pyruvoyl-dependent decarboxylation of aspartate to produce beta-alanine. The sequence is that of Aspartate 1-decarboxylase from Geobacter sp. (strain M21).